A 561-amino-acid polypeptide reads, in one-letter code: Transmembrane protein 209 (561 aa).

Phosphoserine occurs at positions 9 and 11. The helical transmembrane segment at 28–48 (VVLAWGLLNVSMAGMIYTEMT) threads the bilayer. N-linked (GlcNAc...) asparagine glycosylation is present at Asn-57. The chain crosses the membrane as a helical span at residues 60 to 80 (YWPLWYIELALASLFSLNALF). At Ser-98 the chain carries Phosphoserine. 2 disordered regions span residues 119–157 (DLAATQIPPAPPSPSIQGQSVLSYSPSRSPSTSPKFTTS) and 195–234 (FSPSPPSPYPTTVGPVESSGLRSRYRSSPTVYNSPTDKED). Low complexity predominate over residues 133 to 157 (SIQGQSVLSYSPSRSPSTSPKFTTS). Phosphoserine is present on residues Ser-201, Ser-222, and Ser-248. Positions 220-229 (RSSPTVYNSP) are enriched in polar residues. The disordered stretch occupies residues 250–271 (EEKQHRVKLGSPDSTSPSSSPT). Over residues 260–271 (SPDSTSPSSSPT) the composition is skewed to low complexity. Asn-274 carries N-linked (GlcNAc...) asparagine glycosylation. Phosphoserine is present on Ser-278.

As to quaternary structure, interacts with NUP205. In terms of tissue distribution, expressed in the testis.

Its subcellular location is the membrane. The protein resides in the nucleus envelope. It is found in the golgi apparatus. It localises to the cytoplasm. In terms of biological role, nuclear envelope protein which in association with NUP205, may be involved in nuclear transport of various nuclear proteins in addition to MYC. The sequence is that of Transmembrane protein 209 (TMEM209) from Homo sapiens (Human).